The primary structure comprises 173 residues: Nicotinamide-nucleotide adenylyltransferase (173 aa).

It belongs to the archaeal NMN adenylyltransferase family.

The protein resides in the cytoplasm. The enzyme catalyses beta-nicotinamide D-ribonucleotide + ATP + H(+) = diphosphate + NAD(+). It participates in cofactor biosynthesis; NAD(+) biosynthesis; NAD(+) from nicotinamide D-ribonucleotide: step 1/1. This chain is Nicotinamide-nucleotide adenylyltransferase (ffdC), found in Methanolobus tindarius.